The following is a 492-amino-acid chain: Transmembrane protein 39B (492 aa).

The interval methionine 1–proline 54 is disordered. Asparagine 8 carries N-linked (GlcNAc...) asparagine glycosylation. Positions glycine 28–serine 53 are enriched in low complexity. Helical transmembrane passes span serine 77–isoleucine 97, threonine 115–glycine 135, serine 153–leucine 175, threonine 185–leucine 205, glutamate 288–valine 308, leucine 322–serine 342, isoleucine 421–methionine 441, and histidine 447–leucine 467.

Belongs to the TMEM39 family.

The protein localises to the endoplasmic reticulum membrane. Its function is as follows. May protect the cells against DNA damage caused by exposure to the cold-warming stress and facilitates tissue damage repair during the recovery phase. In Homo sapiens (Human), this protein is Transmembrane protein 39B.